Here is a 520-residue protein sequence, read N- to C-terminus: Putative cytochrome P450 CYP13A3 (520 aa).

Residue cysteine 464 participates in heme binding.

This sequence belongs to the cytochrome P450 family. The cofactor is heme.

Its function is as follows. Cytochromes P450 are a group of heme-thiolate monooxygenases. They oxidize a variety of structurally unrelated compounds, including steroids, fatty acids, and xenobiotics. In Caenorhabditis elegans, this protein is Putative cytochrome P450 CYP13A3 (cyp-13A3).